Consider the following 311-residue polypeptide: 26S proteasome regulatory subunit RPN11 (311 aa).

Residues 32–167 (VYISSLALLK…IDAFRLISPA (136 aa)) form the MPN domain. Positions 114, 116, and 127 each coordinate Zn(2+). The short motif at 114-127 (HSHPGFGCWLSSVD) is the JAMM motif element.

It belongs to the peptidase M67A family.

Functionally, acts as a regulatory subunit of the 26 proteasome which is involved in the ATP-dependent degradation of ubiquitinated proteins. This Eremothecium gossypii (strain ATCC 10895 / CBS 109.51 / FGSC 9923 / NRRL Y-1056) (Yeast) protein is 26S proteasome regulatory subunit RPN11 (RPN11).